The primary structure comprises 243 residues: Leucyl/phenylalanyl-tRNA--protein transferase (243 aa).

It belongs to the L/F-transferase family.

It is found in the cytoplasm. The catalysed reaction is N-terminal L-lysyl-[protein] + L-leucyl-tRNA(Leu) = N-terminal L-leucyl-L-lysyl-[protein] + tRNA(Leu) + H(+). It catalyses the reaction N-terminal L-arginyl-[protein] + L-leucyl-tRNA(Leu) = N-terminal L-leucyl-L-arginyl-[protein] + tRNA(Leu) + H(+). It carries out the reaction L-phenylalanyl-tRNA(Phe) + an N-terminal L-alpha-aminoacyl-[protein] = an N-terminal L-phenylalanyl-L-alpha-aminoacyl-[protein] + tRNA(Phe). Functionally, functions in the N-end rule pathway of protein degradation where it conjugates Leu, Phe and, less efficiently, Met from aminoacyl-tRNAs to the N-termini of proteins containing an N-terminal arginine or lysine. This chain is Leucyl/phenylalanyl-tRNA--protein transferase, found in Xylella fastidiosa (strain 9a5c).